The chain runs to 115 residues: Insulin (115 aa).

The N-terminal stretch at 1–26 (MALSPFLAAVIPLVLLLSRAPPSADT) is a signal peptide. Disulfide bonds link Cys-33–Cys-101, Cys-45–Cys-114, and Cys-100–Cys-105. A propeptide spans 60–92 (DTGALAAFLPLAYAEDNESQDDESIGINEVLKS) (c peptide).

Belongs to the insulin family. As to quaternary structure, heterodimer of a B chain and an A chain linked by two disulfide bonds.

It is found in the secreted. Functionally, insulin decreases blood glucose concentration. It increases cell permeability to monosaccharides, amino acids and fatty acids. It accelerates glycolysis, the pentose phosphate cycle, and glycogen synthesis in liver. This chain is Insulin (ins), found in Myxine glutinosa (Atlantic hagfish).